We begin with the raw amino-acid sequence, 400 residues long: Hyaluronidase (400 aa).

The signal sequence occupies residues 1-19; sequence MQTILVLTTFLSAWFLAVG. Disulfide bonds link cysteine 31-cysteine 319, cysteine 196-cysteine 209, cysteine 344-cysteine 355, cysteine 349-cysteine 384, and cysteine 386-cysteine 395. Glutamate 120 acts as the Proton donor in catalysis. Asparagine 129 and asparagine 166 each carry an N-linked (GlcNAc...) asparagine glycan. N-linked (GlcNAc...) asparagine glycans are attached at residues asparagine 243 and asparagine 275. Residues 340–396 form the EGF-like domain; the sequence is NVARCSKQACSGRGRCTWPKDTSVIAWKFLVEKEDYDFYLGDIECKCVEGYEGRYCE.

This sequence belongs to the glycosyl hydrolase 56 family. In terms of assembly, monomer. As to expression, expressed by the venom gland.

It is found in the secreted. The enzyme catalyses Random hydrolysis of (1-&gt;4)-linkages between N-acetyl-beta-D-glucosamine and D-glucuronate residues in hyaluronate.. Spider venom endo-hyaluronidase that is able to degrade purified hyaluronic acid (HA) and chondroitin sulfate (CS). Has no activity on dermatan sulfate (DS) and heparan sulfate (HS). Also increases the dermonecrotic effect of the dermonecrotic toxin (AC P0CE80), when injected in rabbit skin, supporting the hypothesis that venom hyaluronidases are spreading factors. This Loxosceles intermedia (Brown spider) protein is Hyaluronidase.